Reading from the N-terminus, the 319-residue chain is Cobalamin biosynthesis protein CobD (319 aa).

Helical transmembrane passes span 54 to 76 (VLLLLTVLLIVTALSLALVWLSY), 154 to 173 (GVTAPLFYALIGGAPLALLY), and 301 to 318 (VLGFLVFLFLLGGFIYAI).

The protein belongs to the CobD/CbiB family.

It localises to the cell membrane. Its pathway is cofactor biosynthesis; adenosylcobalamin biosynthesis. In terms of biological role, converts cobyric acid to cobinamide by the addition of aminopropanol on the F carboxylic group. This is Cobalamin biosynthesis protein CobD from Halalkalibacterium halodurans (strain ATCC BAA-125 / DSM 18197 / FERM 7344 / JCM 9153 / C-125) (Bacillus halodurans).